Reading from the N-terminus, the 242-residue chain is Type III pantothenate kinase (242 aa).

6 to 13 is a binding site for ATP; the sequence is DAGNTRLK. Substrate-binding positions include Tyr-90 and 97–100; that span reads GADR. Asp-99 (proton acceptor) is an active-site residue. Asp-119 serves as a coordination point for K(+). Ser-122 is an ATP binding site. Residue Thr-174 coordinates substrate.

The protein belongs to the type III pantothenate kinase family. Homodimer. Requires NH4(+) as cofactor. K(+) serves as cofactor.

It is found in the cytoplasm. It carries out the reaction (R)-pantothenate + ATP = (R)-4'-phosphopantothenate + ADP + H(+). Its pathway is cofactor biosynthesis; coenzyme A biosynthesis; CoA from (R)-pantothenate: step 1/5. In terms of biological role, catalyzes the phosphorylation of pantothenate (Pan), the first step in CoA biosynthesis. This is Type III pantothenate kinase from Marinobacter nauticus (strain ATCC 700491 / DSM 11845 / VT8) (Marinobacter aquaeolei).